Reading from the N-terminus, the 334-residue chain is MLYAKALSIGDEIGFFSPSSPATAFAPNRFQRAKAYLKAQGFELVEGSLTGKSDYYRSGSIRERAEELNQLIRDPNVRCIMPTIGGNNSNSLLPYIDYEALRNDPKIIIGYSDVTALLLGIYAQTGLITFYGPALVASFGEYPPLVDETFHSFIDLLCSETNQYQYTMPSSWTDIKHDWETQHSAKPVYPNEWQFIGKGKVTGRIIGGNLNTMAGIWGSRYMPEIKVGDILLIEDSLKGIENVERSFAHLAACGVFERVSAIILGKHELFDNKGTGRTPLDVLIEVLADKNVPIFYGFDSCHTHPMLVTPLGVRGTIDFDNHTFKLEDRWVKAK.

Ser112 (nucleophile) is an active-site residue. Residues Glu234 and His302 each act as charge relay system in the active site.

This sequence belongs to the peptidase S66 family.

The sequence is that of Putative carboxypeptidase VC_A0337 from Vibrio cholerae serotype O1 (strain ATCC 39315 / El Tor Inaba N16961).